The sequence spans 132 residues: ATP synthase epsilon chain, chloroplastic (132 aa).

This sequence belongs to the ATPase epsilon chain family. F-type ATPases have 2 components, CF(1) - the catalytic core - and CF(0) - the membrane proton channel. CF(1) has five subunits: alpha(3), beta(3), gamma(1), delta(1), epsilon(1). CF(0) has three main subunits: a, b and c.

Its subcellular location is the plastid. The protein resides in the chloroplast thylakoid membrane. Functionally, produces ATP from ADP in the presence of a proton gradient across the membrane. In Calycanthus floridus var. glaucus (Eastern sweetshrub), this protein is ATP synthase epsilon chain, chloroplastic.